The sequence spans 681 residues: DNA-directed RNA polymerase subunit beta' (681 aa).

The Zn(2+) site is built by cysteine 69, cysteine 71, cysteine 87, and cysteine 90. Positions 490, 492, and 494 each coordinate Mg(2+).

The protein belongs to the RNA polymerase beta' chain family. RpoC1 subfamily. In plastids the minimal PEP RNA polymerase catalytic core is composed of four subunits: alpha, beta, beta', and beta''. When a (nuclear-encoded) sigma factor is associated with the core the holoenzyme is formed, which can initiate transcription. The cofactor is Mg(2+). It depends on Zn(2+) as a cofactor.

The protein resides in the plastid. The protein localises to the chloroplast. The catalysed reaction is RNA(n) + a ribonucleoside 5'-triphosphate = RNA(n+1) + diphosphate. Functionally, DNA-dependent RNA polymerase catalyzes the transcription of DNA into RNA using the four ribonucleoside triphosphates as substrates. In Liriodendron tulipifera (Tuliptree), this protein is DNA-directed RNA polymerase subunit beta'.